Reading from the N-terminus, the 367-residue chain is Beta sliding clamp (367 aa).

This sequence belongs to the beta sliding clamp family. In terms of assembly, forms a ring-shaped head-to-tail homodimer around DNA which binds and tethers DNA polymerases and other proteins to the DNA. The DNA replisome complex has a single clamp-loading complex (3 tau and 1 each of delta, delta', psi and chi subunits) which binds 3 Pol III cores (1 core on the leading strand and 2 on the lagging strand) each with a beta sliding clamp dimer. Additional proteins in the replisome are other copies of gamma, psi and chi, Ssb, DNA helicase and RNA primase.

It localises to the cytoplasm. In terms of biological role, confers DNA tethering and processivity to DNA polymerases and other proteins. Acts as a clamp, forming a ring around DNA (a reaction catalyzed by the clamp-loading complex) which diffuses in an ATP-independent manner freely and bidirectionally along dsDNA. Initially characterized for its ability to contact the catalytic subunit of DNA polymerase III (Pol III), a complex, multichain enzyme responsible for most of the replicative synthesis in bacteria; Pol III exhibits 3'-5' exonuclease proofreading activity. The beta chain is required for initiation of replication as well as for processivity of DNA replication. The chain is Beta sliding clamp (dnaN) from Proteus mirabilis.